A 315-amino-acid polypeptide reads, in one-letter code: Olfactory receptor 10A4 (315 aa).

At 1-26 (MMWENWTIVSEFVLVSFSALSTELQA) the chain is on the extracellular side. N-linked (GlcNAc...) asparagine glycosylation is present at asparagine 5. Residues 27 to 47 (LLFLLFLTIYLVTLMGNVLII) form a helical membrane-spanning segment. At 48–55 (LVTIADSA) the chain is on the cytoplasmic side. The chain crosses the membrane as a helical span at residues 56–76 (LQSPMYFFLRNLSFLEIGFNL). At 77-100 (VIVPKMLGTLIIQDTTISFLGCAT) the chain is on the extracellular side. Cysteines 98 and 190 form a disulfide. Residues 101–121 (QMYFFFFFGAAECCLLATMAY) traverse the membrane as a helical segment. The Cytoplasmic portion of the chain corresponds to 122-140 (DRYVAICDPLHYPVIMGHI). The helical transmembrane segment at 141-161 (SCAQLAAASWFSGFSVATVQT) threads the bilayer. Residues 162-198 (TWIFSFPFCGPNRVNHFFCDSPPVIALVCADTSVFEL) are Extracellular-facing. The chain crosses the membrane as a helical span at residues 199-218 (EALTATVLFILFPFLLILGS). Topologically, residues 219 to 238 (YVRILSTIFRMPSAEGKHQA) are cytoplasmic. Residues 239–259 (FSTCSAHLLVVSLFYSTAILT) form a helical membrane-spanning segment. Residues 260-272 (YFRPQSSASSESK) are Extracellular-facing. Residues 273 to 293 (KLLSLSSTVVTPMLNPIIYSS) traverse the membrane as a helical segment. Residues 294–315 (RNKEVKAALKRLIHRTLGSQKL) lie on the Cytoplasmic side of the membrane.

The protein belongs to the G-protein coupled receptor 1 family. In terms of tissue distribution, expressed in the tongue.

The protein resides in the cell membrane. In terms of biological role, odorant receptor (Potential). May be involved in taste perception. This Homo sapiens (Human) protein is Olfactory receptor 10A4 (OR10A4).